Consider the following 75-residue polypeptide: Putative membrane protein insertion efficiency factor 2 (75 aa).

The protein belongs to the UPF0161 family.

The protein localises to the cell membrane. Could be involved in insertion of integral membrane proteins into the membrane. The protein is Putative membrane protein insertion efficiency factor 2 of Bacillus licheniformis (strain ATCC 14580 / DSM 13 / JCM 2505 / CCUG 7422 / NBRC 12200 / NCIMB 9375 / NCTC 10341 / NRRL NRS-1264 / Gibson 46).